The sequence spans 95 residues: Co-chaperonin GroES (95 aa).

Belongs to the GroES chaperonin family. As to quaternary structure, heptamer of 7 subunits arranged in a ring. Interacts with the chaperonin GroEL.

Its subcellular location is the cytoplasm. Together with the chaperonin GroEL, plays an essential role in assisting protein folding. The GroEL-GroES system forms a nano-cage that allows encapsulation of the non-native substrate proteins and provides a physical environment optimized to promote and accelerate protein folding. GroES binds to the apical surface of the GroEL ring, thereby capping the opening of the GroEL channel. The sequence is that of Co-chaperonin GroES from Streptococcus thermophilus (strain ATCC BAA-491 / LMD-9).